Here is a 274-residue protein sequence, read N- to C-terminus: 16S rRNA (guanine(1405)-N(7))-methyltransferase (274 aa).

Residues Phe64, 102-104 (HMS), Arg108, Ala133, Asp156, 182-183 (DL), Leu198, and Gln207 each bind S-adenosyl-L-methionine.

The protein belongs to the methyltransferase superfamily. Aminoglycoside resistance family.

The enzyme catalyses guanosine(1405) in 16S rRNA + S-adenosyl-L-methionine = N(7)-methylguanosine(1405) in 16S rRNA + S-adenosyl-L-homocysteine. Functionally, specifically methylates the N(7) position of guanine 1405 in 16S rRNA. Confers resistance to aminoglycosides. The chain is 16S rRNA (guanine(1405)-N(7))-methyltransferase (grm) from Micromonospora rosea.